A 310-amino-acid polypeptide reads, in one-letter code: HPr kinase/phosphorylase (310 aa).

Residues histidine 138 and lysine 159 contribute to the active site. Residue 153–160 (GDSGIGKS) coordinates ATP. Serine 160 serves as a coordination point for Mg(2+). The active-site Proton acceptor; for phosphorylation activity. Proton donor; for dephosphorylation activity is the aspartate 177. The important for the catalytic mechanism of both phosphorylation and dephosphorylation stretch occupies residues 201–210 (LEIRGVGIID). Glutamate 202 serves as a coordination point for Mg(2+). The active site involves arginine 243. Residues 264–269 (PVKTGR) form an important for the catalytic mechanism of dephosphorylation region.

Belongs to the HPrK/P family. As to quaternary structure, homohexamer. The cofactor is Mg(2+).

The catalysed reaction is [HPr protein]-L-serine + ATP = [HPr protein]-O-phospho-L-serine + ADP + H(+). It catalyses the reaction [HPr protein]-O-phospho-L-serine + phosphate + H(+) = [HPr protein]-L-serine + diphosphate. Catalyzes the ATP- as well as the pyrophosphate-dependent phosphorylation of a specific serine residue in HPr, a phosphocarrier protein of the phosphoenolpyruvate-dependent sugar phosphotransferase system (PTS). HprK/P also catalyzes the pyrophosphate-producing, inorganic phosphate-dependent dephosphorylation (phosphorolysis) of seryl-phosphorylated HPr (P-Ser-HPr). The two antagonistic activities of HprK/P are regulated by several intracellular metabolites, which change their concentration in response to the absence or presence of rapidly metabolisable carbon sources (glucose, fructose, etc.) in the growth medium. Therefore, by controlling the phosphorylation state of HPr, HPrK/P is a sensor enzyme that plays a major role in the regulation of carbon metabolism and sugar transport: it mediates carbon catabolite repression (CCR), and regulates PTS-catalyzed carbohydrate uptake and inducer exclusion. The protein is HPr kinase/phosphorylase of Streptococcus equi subsp. equi (strain 4047).